The following is a 98-amino-acid chain: MSTLQQSASGKKDGDIRYLTPLNIDTNKTKKYCRFKKSGIKYIDYKDADFLLKFVNEQGKILPRRLTGTSLKYQRKVSVAVKRARHLAFMPYVADLLK.

The protein belongs to the bacterial ribosomal protein bS18 family. In terms of assembly, part of the 30S ribosomal subunit. Forms a tight heterodimer with protein bS6.

Its function is as follows. Binds as a heterodimer with protein bS6 to the central domain of the 16S rRNA, where it helps stabilize the platform of the 30S subunit. The chain is Small ribosomal subunit protein bS18 from Flavobacterium psychrophilum (strain ATCC 49511 / DSM 21280 / CIP 103535 / JIP02/86).